The primary structure comprises 200 residues: Imidazole glycerol phosphate synthase subunit HisH (200 aa).

In terms of domain architecture, Glutamine amidotransferase type-1 spans 2 to 200 (KVAIVEYGVG…LGEVLTGASR (199 aa)). The Nucleophile role is filled by cysteine 79. Active-site residues include histidine 179 and glutamate 181.

As to quaternary structure, heterodimer of HisH and HisF.

Its subcellular location is the cytoplasm. It catalyses the reaction 5-[(5-phospho-1-deoxy-D-ribulos-1-ylimino)methylamino]-1-(5-phospho-beta-D-ribosyl)imidazole-4-carboxamide + L-glutamine = D-erythro-1-(imidazol-4-yl)glycerol 3-phosphate + 5-amino-1-(5-phospho-beta-D-ribosyl)imidazole-4-carboxamide + L-glutamate + H(+). The enzyme catalyses L-glutamine + H2O = L-glutamate + NH4(+). It participates in amino-acid biosynthesis; L-histidine biosynthesis; L-histidine from 5-phospho-alpha-D-ribose 1-diphosphate: step 5/9. IGPS catalyzes the conversion of PRFAR and glutamine to IGP, AICAR and glutamate. The HisH subunit catalyzes the hydrolysis of glutamine to glutamate and ammonia as part of the synthesis of IGP and AICAR. The resulting ammonia molecule is channeled to the active site of HisF. The polypeptide is Imidazole glycerol phosphate synthase subunit HisH (Methanopyrus kandleri (strain AV19 / DSM 6324 / JCM 9639 / NBRC 100938)).